The following is a 322-amino-acid chain: tRNA pseudouridine synthase B (322 aa).

The span at 1-11 shows a compositional bias: basic and acidic residues; the sequence is MRPPRTTELDR. The segment at 1–22 is disordered; it reads MRPPRTTELDRPMTTAASQRPR. Asp-65 (nucleophile) is an active-site residue.

The protein belongs to the pseudouridine synthase TruB family. Type 1 subfamily.

The enzyme catalyses uridine(55) in tRNA = pseudouridine(55) in tRNA. Responsible for synthesis of pseudouridine from uracil-55 in the psi GC loop of transfer RNAs. This is tRNA pseudouridine synthase B from Burkholderia lata (strain ATCC 17760 / DSM 23089 / LMG 22485 / NCIMB 9086 / R18194 / 383).